Here is a 458-residue protein sequence, read N- to C-terminus: MENVITNNNKGLPKSILKFIPEPIQPLFENPFFSAGFGLIGVGSILAMGRKGFQQAMIQSRRYFFVSVEVPSKDKSFHWLMEWLATKKNKNTRHVSVETTFHQHESGDIVSRINFVPSVGTHYVFYRGRVIKVERSREKNVIDMNSGNLWESITLTTLGTGRQVFQNLIEEAKEMALEKEEGKTLIYTSMGTDWRRFGHPRRKRPISSVILDKGKSELIIQDVKKFLNNSDWYNDRGIPYRRGYLLYGPPGTGKSSFITALAGELQLSICILNLAGKSVSDTSLNQLLATAPQRSIILLEDIDSAIQTGNHDLSAKSNSANAPSISSGGLQYQGYYGNPSVSSGGSALTFSGLLNALDGVAASEGRILFMTTNHLEKLDKVLIRPGRVDLQIEIGLCSSYQMEQMFLKFYPTDFDLAKQFVEKLENYKFSPAQLQAYFMTYSNNSIEAINNLNELIKK.

The Mitochondrial intermembrane segment spans residues 1–26; the sequence is MENVITNNNKGLPKSILKFIPEPIQP. The chain crosses the membrane as a helical span at residues 27 to 47; the sequence is LFENPFFSAGFGLIGVGSILA. Over 48–458 the chain is Mitochondrial matrix; the sequence is MGRKGFQQAM…INNLNELIKK (411 aa). ATP is bound at residue 248–255; that stretch reads GPPGTGKS.

This sequence belongs to the AAA ATPase family. BCS1 subfamily.

Its subcellular location is the mitochondrion inner membrane. It catalyses the reaction ATP + H2O = ADP + phosphate + H(+). Functionally, chaperone necessary for the assembly of mitochondrial respiratory chain complex III. The protein is Probable mitochondrial chaperone BCS1-B (bcsl1b) of Dictyostelium discoideum (Social amoeba).